A 105-amino-acid polypeptide reads, in one-letter code: Integration host factor subunit beta (105 aa).

Belongs to the bacterial histone-like protein family. Heterodimer of an alpha and a beta chain.

Functionally, this protein is one of the two subunits of integration host factor, a specific DNA-binding protein that functions in genetic recombination as well as in transcriptional and translational control. This chain is Integration host factor subunit beta, found in Bradyrhizobium sp. (strain ORS 278).